The chain runs to 169 residues: Transmembrane protein B169L (169 aa).

The next 2 helical transmembrane spans lie at 28 to 48 (NPFI…FAIC) and 60 to 80 (TAIY…YVLN). N-linked (GlcNAc...) asparagine; by host glycosylation occurs at Asn-88. The segment at 107–169 (DEIIPPISPP…EVIMPSQYNN (63 aa)) is disordered. The segment covering 140–154 (KPADSKPASSADSKP) has biased composition (low complexity).

The protein belongs to the asfivirus B169L family.

It localises to the host membrane. The protein localises to the virion. The protein is Transmembrane protein B169L of Ornithodoros (relapsing fever ticks).